The primary structure comprises 545 residues: MAEVKCSSSTGSPTTNGLVANAELEVKKLQELVRKLEKQNEQLRNRASAVSNCTPSPHLLLQHPPSVVHQSGTCILSSPVLTRPAGLCLPSPVPTLLCTSAVAGSLFSPESMGCFSTNKRLHLSCINAAEGPQNDCPVPGSTLLDEVQVLDLEDGYCSGDEDTWLYVSPTKDQRTFDSSVSPLQWCRQVLDHPSPEIEAAKRSLCFRLEQGYTVKTSHLSPQSSVDSELSTSELEDDSISMGYKLQDLTDVQIMARLQEESLRQDFATTSTCSSVSRPRSSFSLYSGKKLSCSSDQDSDRYSVEEDDEDFDHLPPPQPRLSRCSPLQRGLSHSQTFSSIRDCRKSPSSQFLNGYQQYNYSSQPQTTEQSQSRTNADKLRRSMPNLARMPSTNNNPVVSMTTVRNSQSFDSNLHGAANGVSRMQSSIPSPGQLQQRVHSVGHFPVSVRPPLKATAYVSPTVQGGSGIPSSTSLQSLSSSGIPMPNKTTSAATIGRSALPRPALSTANGSSIPRSKIAQPQRSFLQPPKTLASLSTLRDGNWRDGCY.

The stretch at 14-53 (TTNGLVANAELEVKKLQELVRKLEKQNEQLRNRASAVSNC) forms a coiled coil. Low complexity-rich tracts occupy residues 268-286 (TTST…SLYS) and 466-481 (IPSS…SGIP). Disordered regions lie at residues 268–342 (TTST…IRDC) and 461–526 (QGGS…LQPP). Positions 503-522 (STANGSSIPRSKIAQPQRSF) are enriched in polar residues.

Belongs to the SLAIN motif-containing family.

The protein resides in the cytoplasm. It localises to the cytoskeleton. Its function is as follows. Microtubule plus-end tracking protein that might be involved in the regulation of cytoplasmic microtubule dynamics, microtubule organization and microtubule elongation. The sequence is that of SLAIN motif-containing protein 1 (slain1) from Xenopus tropicalis (Western clawed frog).